We begin with the raw amino-acid sequence, 199 residues long: Dephospho-CoA kinase (199 aa).

In terms of domain architecture, DPCK spans 2 to 199 (KIAVTGGYSS…FVADRIEKKK (198 aa)). 10–15 (SSGKSS) contacts ATP.

Belongs to the CoaE family.

It is found in the cytoplasm. It carries out the reaction 3'-dephospho-CoA + ATP = ADP + CoA + H(+). The protein operates within cofactor biosynthesis; coenzyme A biosynthesis; CoA from (R)-pantothenate: step 5/5. In terms of biological role, catalyzes the phosphorylation of the 3'-hydroxyl group of dephosphocoenzyme A to form coenzyme A. This Desulfotalea psychrophila (strain LSv54 / DSM 12343) protein is Dephospho-CoA kinase.